The following is a 246-amino-acid chain: NH(3)-dependent NAD(+) synthetase (246 aa).

29 to 36 is an ATP binding site; that stretch reads GLSGGIDS. Asp35 lines the Mg(2+) pocket. A deamido-NAD(+)-binding site is contributed by Arg110. Thr130 contributes to the ATP binding site. Glu135 contributes to the Mg(2+) binding site. Residues Lys159 and Ser181 each coordinate ATP.

This sequence belongs to the NAD synthetase family. Homodimer.

The enzyme catalyses deamido-NAD(+) + NH4(+) + ATP = AMP + diphosphate + NAD(+) + H(+). The protein operates within cofactor biosynthesis; NAD(+) biosynthesis; NAD(+) from deamido-NAD(+) (ammonia route): step 1/1. In terms of biological role, catalyzes the ATP-dependent amidation of deamido-NAD to form NAD. Uses ammonia as a nitrogen source. The polypeptide is NH(3)-dependent NAD(+) synthetase (Campylobacter jejuni subsp. doylei (strain ATCC BAA-1458 / RM4099 / 269.97)).